Reading from the N-terminus, the 305-residue chain is Serine/threonine-protein phosphatase PP-X homolog 3 (305 aa).

Residues D53, H55, D81, and N113 each coordinate Mn(2+). Catalysis depends on H114, which acts as the Proton donor. 2 residues coordinate Mn(2+): H163 and H237.

This sequence belongs to the PPP phosphatase family. PP-4 (PP-X) subfamily. It depends on Mn(2+) as a cofactor.

The catalysed reaction is O-phospho-L-seryl-[protein] + H2O = L-seryl-[protein] + phosphate. It catalyses the reaction O-phospho-L-threonyl-[protein] + H2O = L-threonyl-[protein] + phosphate. This chain is Serine/threonine-protein phosphatase PP-X homolog 3 (Ppx3), found in Paramecium tetraurelia.